The following is a 174-amino-acid chain: MDKHGVKTPLWKKETEELRAEDAEQEEGKEGSEDEDEDNQRPLEDSATEGEEPPRVAEEGEGRERRSVSYCPLRQESSTQQVALLRRADSGFWGWLGPLALLGGLTAPTDRKRSLPEEPCVLEIRRRPPRRGGCACCELLFCKKCRSLHSHPAYVAHCVLDHPDLGKAGAAGNS.

2 stretches are compositionally biased toward basic and acidic residues: residues 1 to 31 (MDKH…GKEG) and 52 to 67 (EPPR…ERRS). The disordered stretch occupies residues 1–69 (MDKHGVKTPL…GEGRERRSVS (69 aa)).

This is an uncharacterized protein from Homo sapiens (Human).